The following is a 361-amino-acid chain: MGNILTCCVCPRASPGLHQHQGLVCHCESEIYEAAAGDLIAGVPVAAAVEPGEVTFVAGEGLHMHHICEREMPEDIPLEPNPSDHPKASTIFLRKSQTDVQEKKKKQLCKVSTEHFTQQYSSCSTIFLDDSIASQPHLTMTLKSCDLGTILSYQAKRDAHRSLGIFDEQLHPLTVRKEVLEEYFKYDPEHKLIFRFVRTLFKAMRLTAEFAIVSLIYIERLVSYADIDICPTNWKRIVLGAILLASKVWSDMAVWNEDYCKLFKNITVEEMNELERQFLKLINYNNSITNSVYSRFYFDLRTLAHNNGLYSPVYLLDRERAWKLEAFSRMEQDKVFYSAAKNGSLSADDLIHLQRAKAILF.

The Cyclin N-terminal domain maps to 204–286 (MRLTAEFAIV…QFLKLINYNN (83 aa)).

Belongs to the cyclin family. Cyclin Y subfamily.

The chain is Cyclin-Y-like protein 2 (CCNYL2) from Homo sapiens (Human).